Here is a 314-residue protein sequence, read N- to C-terminus: Olfactory receptor 1 (314 aa).

Residues 1–29 (MTERNQTVISQFLLLGLPIPPEHQHVFYA) lie on the Extracellular side of the membrane. N-linked (GlcNAc...) asparagine glycosylation occurs at N5. Residues 30-50 (LFLSMYLTTVLGNLIIIILIL) traverse the membrane as a helical segment. Residues 51 to 59 (LDSHLHTPM) are Cytoplasmic-facing. The chain crosses the membrane as a helical span at residues 60–81 (YLFLSNLSFSDLCFSSVTMPKL). Residues 82–97 (LQNMQSQVPSIPYAGC) lie on the Extracellular side of the membrane. A disulfide bridge links C97 with C179. A helical transmembrane segment spans residues 98–118 (LSQIYFFLFFGDLGNFLLVAM). Residues 119–143 (AYDRYVAICFPLHYMSIMSPKLCVS) lie on the Cytoplasmic side of the membrane. A helical membrane pass occupies residues 144-164 (LVVLSWVLTTFHAMLHTLLMA). Residues 165–196 (RLSFCEDNVIPHFFCDMSALLKLACSDTRVNE) are Extracellular-facing. Residues 197–217 (VVIFIVVSLFLVLPFALIIMS) form a helical membrane-spanning segment. Residues 218–240 (YVRIVSSILKVPSSQGIYKAFST) lie on the Cytoplasmic side of the membrane. A helical transmembrane segment spans residues 241 to 261 (CGSHLSVVSLFYGTVIGLYLC). The Extracellular segment spans residues 262 to 271 (PSSNNSTVKE). Residues N265 and N266 are each glycosylated (N-linked (GlcNAc...) asparagine). Residues 272–292 (TVMSLMYTVVTPMLNPFIYSL) form a helical membrane-spanning segment. The Cytoplasmic segment spans residues 293–314 (RNRDIKGAMERIFCKRKIQLNL).

This sequence belongs to the G-protein coupled receptor 1 family. As to expression, olfactory epithelium.

It localises to the cell membrane. Functionally, odorant receptor. Activated by a lily-derived aldehyde as well as other odorants. May signal through an inositol 1,4,5-trisphosphate (IP3) second messenger system. In Rattus norvegicus (Rat), this protein is Olfactory receptor 1.